We begin with the raw amino-acid sequence, 385 residues long: T-box transcription factor TBX10 (385 aa).

Residues 22 to 61 (TTSSGWEPRLGSPFPSGPCTSSTGAQAVAEPTGQGPKNPR) are disordered. The T-box DNA-binding region spans 69 to 252 (LEMKPLWEEF…SNPFAKGFRE (184 aa)).

Its subcellular location is the nucleus. Probable transcriptional regulator involved in developmental processes. The sequence is that of T-box transcription factor TBX10 (TBX10) from Homo sapiens (Human).